The following is a 150-amino-acid chain: Depactin (150 aa).

The ADF-H domain maps to 3–148; sequence SGTALDENVK…SEEAIGDKIK (146 aa).

Belongs to the actin-binding proteins ADF family.

Functionally, depactin interacts with actin at some of its 12 N-terminal residues and 20 C-terminal residues. Binds to actin monomers from filaments and in solution. This chain is Depactin, found in Asterias amurensis (Northern Pacific seastar).